We begin with the raw amino-acid sequence, 102 residues long: Large ribosomal subunit protein uL24 (102 aa).

It belongs to the universal ribosomal protein uL24 family. In terms of assembly, part of the 50S ribosomal subunit.

One of two assembly initiator proteins, it binds directly to the 5'-end of the 23S rRNA, where it nucleates assembly of the 50S subunit. In terms of biological role, one of the proteins that surrounds the polypeptide exit tunnel on the outside of the subunit. This is Large ribosomal subunit protein uL24 from Limosilactobacillus fermentum (strain NBRC 3956 / LMG 18251) (Lactobacillus fermentum).